The sequence spans 811 residues: Lysine-specific histone demethylase 1 homolog 3 (811 aa).

Residues 1-10 (MSDQPPPYTP) show a composition bias toward pro residues. The interval 1–79 (MSDQPPPYTP…PSAQPPPRAS (79 aa)) is disordered. Positions 44-55 (NKRKRTGFRRKL) are enriched in basic residues. The segment covering 56–71 (PSGSPAAPVAVAASPS) has biased composition (low complexity). In terms of domain architecture, SWIRM spans 88–189 (NREPTAEAVT…FGVAPAIKER (102 aa)). The FAD site is built by E227, R229, R235, and E609. Residues 790–811 (RNSSRTKTRPSKLKIGIPKSKS) are disordered.

The protein belongs to the flavin monoamine oxidase family. The cofactor is FAD.

Its function is as follows. Probable histone demethylase. In Oryza sativa subsp. japonica (Rice), this protein is Lysine-specific histone demethylase 1 homolog 3.